A 1379-amino-acid polypeptide reads, in one-letter code: DNA-directed RNA polymerase subunit beta (1379 aa).

This sequence belongs to the RNA polymerase beta chain family. The RNAP catalytic core consists of 2 alpha, 1 beta, 1 beta' and 1 omega subunit. When a sigma factor is associated with the core the holoenzyme is formed, which can initiate transcription.

The catalysed reaction is RNA(n) + a ribonucleoside 5'-triphosphate = RNA(n+1) + diphosphate. Its function is as follows. DNA-dependent RNA polymerase catalyzes the transcription of DNA into RNA using the four ribonucleoside triphosphates as substrates. The chain is DNA-directed RNA polymerase subunit beta from Rhizobium johnstonii (strain DSM 114642 / LMG 32736 / 3841) (Rhizobium leguminosarum bv. viciae).